Consider the following 1007-residue polypeptide: Glutamate receptor ionotropic, delta-2 (1007 aa).

Residues Met-1–Ala-23 form the signal peptide. The segment at Asp-24–Arg-345 is interaction with CBLN1 homotrimer. Residues Asp-24–Asp-566 are Extracellular-facing. Intrachain disulfides connect Cys-83-Cys-355, Cys-99-Cys-131, and Cys-298-Cys-310. Asn-293 carries an N-linked (GlcNAc...) asparagine glycan. Asn-426 is a glycosylation site (N-linked (GlcNAc...) asparagine). 3 residues coordinate Ca(2+): Glu-531, Val-534, and Asp-535. A helical membrane pass occupies residues Leu-567–Leu-587. The Cytoplasmic segment spans residues Asn-588–Gly-635. A helical membrane pass occupies residues Ala-636 to Leu-656. Over Thr-657–Ser-830 the chain is Extracellular. 2 N-linked (GlcNAc...) asparagine glycosylation sites follow: Asn-713 and Asn-716. Ca(2+) is bound by residues Asp-753, Asp-755, and Ser-757. Residues Phe-831 to Leu-851 traverse the membrane as a helical segment. The Cytoplasmic segment spans residues Glu-852–Ile-1007. Ser-883 bears the Phosphoserine mark. Thr-886 carries the phosphothreonine modification. Residue Ser-890 is modified to Phosphoserine. An interaction with AP4M1 region spans residues Asp-921–Pro-991. Positions Thr-1005–Ile-1007 match the PDZ-binding motif. Ser-1006 is subject to Phosphoserine.

This sequence belongs to the glutamate-gated ion channel (TC 1.A.10.1) family. GRID2 subfamily. Tetramer; dimer of dimers. Interacts with EML2, MAGI2 (via PDZ domains) and AP4M1. Interacts with BECN1, GOPC, GRID2IP, SHANK1 and SHANK2. Interacts with CBLN2, but not with CBLN4. Interacts with CBLN1 (via C1q domain); the interaction is CBLN1-NRX1 complex formation-dependent; CBLN1-binding is calcium-independent; CBLN1 hexamers anchor GRID2 N-terminal domain dimers to monomeric NRXN1 isoform beta; promotes synaptogenesis and mediates the D-Serine-dependent long term depression signals and AMPA receptor endocytosis.

Its subcellular location is the postsynaptic cell membrane. The enzyme catalyses Ca(2+)(in) = Ca(2+)(out). The catalysed reaction is Na(+)(in) = Na(+)(out). Functionally, member of the ionotropic glutamate receptor family, which plays a crucial role in synaptic organization and signal transduction in the central nervous system. Although it shares structural features with ionotropic glutamate receptors, does not bind glutamate as a primary ligand. Promotes synaptogenesis and mediates the D-Serine-dependent long term depression signals and AMPA receptor endocytosis of cerebellar parallel fiber-Purkinje cell (PF-PC) synapses through the NRX1B-CBLN1-GRID2 triad complex. In the presence of neurexins and cerebellins, forms cation-selective channels that are proposed to be gated by glycine and D-serine. However, recent research disputes this ligand-gated cation channel activity. Cation-selective ion channel activity can be triggered by GRM1 in Purkinje cells. In Homo sapiens (Human), this protein is Glutamate receptor ionotropic, delta-2 (GRID2).